The sequence spans 454 residues: Tubulin alpha chain (454 aa).

GTP contacts are provided by Gln12, Asp72, Ser141, Gly145, Thr146, Thr180, Asn207, and Asn229. Mg(2+) is bound at residue Asp72. Glu255 is a catalytic residue.

Belongs to the tubulin family. As to quaternary structure, dimer of alpha and beta chains. A typical microtubule is a hollow water-filled tube with an outer diameter of 25 nm and an inner diameter of 15 nM. Alpha-beta heterodimers associate head-to-tail to form protofilaments running lengthwise along the microtubule wall with the beta-tubulin subunit facing the microtubule plus end conferring a structural polarity. Microtubules usually have 13 protofilaments but different protofilament numbers can be found in some organisms and specialized cells. Requires Mg(2+) as cofactor.

It localises to the cytoplasm. Its subcellular location is the cytoskeleton. It carries out the reaction GTP + H2O = GDP + phosphate + H(+). Functionally, tubulin is the major constituent of microtubules, a cylinder consisting of laterally associated linear protofilaments composed of alpha- and beta-tubulin heterodimers. Microtubules grow by the addition of GTP-tubulin dimers to the microtubule end, where a stabilizing cap forms. Below the cap, tubulin dimers are in GDP-bound state, owing to GTPase activity of alpha-tubulin. The sequence is that of Tubulin alpha chain (TUB1) from Colletotrichum orbiculare (strain 104-T / ATCC 96160 / CBS 514.97 / LARS 414 / MAFF 240422) (Cucumber anthracnose fungus).